The following is a 284-amino-acid chain: Phosphatidylserine decarboxylase proenzyme (284 aa).

Residues Asp-88, His-145, and Ser-248 each act as charge relay system; for autoendoproteolytic cleavage activity in the active site. Ser-248 serves as the catalytic Schiff-base intermediate with substrate; via pyruvic acid; for decarboxylase activity. The residue at position 248 (Ser-248) is a Pyruvic acid (Ser); by autocatalysis.

The protein belongs to the phosphatidylserine decarboxylase family. PSD-B subfamily. Prokaryotic type I sub-subfamily. In terms of assembly, heterodimer of a large membrane-associated beta subunit and a small pyruvoyl-containing alpha subunit. The cofactor is pyruvate. Is synthesized initially as an inactive proenzyme. Formation of the active enzyme involves a self-maturation process in which the active site pyruvoyl group is generated from an internal serine residue via an autocatalytic post-translational modification. Two non-identical subunits are generated from the proenzyme in this reaction, and the pyruvate is formed at the N-terminus of the alpha chain, which is derived from the carboxyl end of the proenzyme. The autoendoproteolytic cleavage occurs by a canonical serine protease mechanism, in which the side chain hydroxyl group of the serine supplies its oxygen atom to form the C-terminus of the beta chain, while the remainder of the serine residue undergoes an oxidative deamination to produce ammonia and the pyruvoyl prosthetic group on the alpha chain. During this reaction, the Ser that is part of the protease active site of the proenzyme becomes the pyruvoyl prosthetic group, which constitutes an essential element of the active site of the mature decarboxylase.

The protein localises to the cell membrane. The catalysed reaction is a 1,2-diacyl-sn-glycero-3-phospho-L-serine + H(+) = a 1,2-diacyl-sn-glycero-3-phosphoethanolamine + CO2. It participates in phospholipid metabolism; phosphatidylethanolamine biosynthesis; phosphatidylethanolamine from CDP-diacylglycerol: step 2/2. In terms of biological role, catalyzes the formation of phosphatidylethanolamine (PtdEtn) from phosphatidylserine (PtdSer). The sequence is that of Phosphatidylserine decarboxylase proenzyme from Albidiferax ferrireducens (strain ATCC BAA-621 / DSM 15236 / T118) (Rhodoferax ferrireducens).